Reading from the N-terminus, the 302-residue chain is Dehydrodolichyl diphosphate synthase 3 (302 aa).

The protein belongs to the UPP synthase family. It depends on Mg(2+) as a cofactor.

Its pathway is protein modification; protein glycosylation. Its function is as follows. Catalyzes cis-prenyl chain elongation to produce the polyprenyl backbone of dolichol, a glycosyl carrier-lipid required for the biosynthesis of several classes of glycoprotein. The protein is Dehydrodolichyl diphosphate synthase 3 of Arabidopsis thaliana (Mouse-ear cress).